The primary structure comprises 233 residues: Orotidine 5'-phosphate decarboxylase (233 aa).

Substrate is bound by residues aspartate 12, lysine 34, 61–70, threonine 116, arginine 181, glutamine 190, glycine 210, and arginine 211; that span reads DWKLHDIGAT. The active-site Proton donor is lysine 63.

It belongs to the OMP decarboxylase family. Type 1 subfamily. Homodimer.

It catalyses the reaction orotidine 5'-phosphate + H(+) = UMP + CO2. It participates in pyrimidine metabolism; UMP biosynthesis via de novo pathway; UMP from orotate: step 2/2. Catalyzes the decarboxylation of orotidine 5'-monophosphate (OMP) to uridine 5'-monophosphate (UMP). This Caulobacter vibrioides (strain ATCC 19089 / CIP 103742 / CB 15) (Caulobacter crescentus) protein is Orotidine 5'-phosphate decarboxylase.